We begin with the raw amino-acid sequence, 395 residues long: Dihydrolipoyllysine-residue succinyltransferase component of 2-oxoglutarate dehydrogenase complex (395 aa).

The region spanning R2 to N77 is the Lipoyl-binding domain. N6-lipoyllysine is present on K43. The 38-residue stretch at T111–I148 folds into the Peripheral subunit-binding (PSBD) domain. Residues H366 and D370 contribute to the active site.

Belongs to the 2-oxoacid dehydrogenase family. As to quaternary structure, forms a 24-polypeptide structural core with octahedral symmetry. Part of the 2-oxoglutarate dehydrogenase (OGDH) complex composed of E1 (2-oxoglutarate dehydrogenase), E2 (dihydrolipoamide succinyltransferase) and E3 (dihydrolipoamide dehydrogenase); the complex contains multiple copies of the three enzymatic components (E1, E2 and E3). It depends on (R)-lipoate as a cofactor.

The catalysed reaction is N(6)-[(R)-dihydrolipoyl]-L-lysyl-[protein] + succinyl-CoA = N(6)-[(R)-S(8)-succinyldihydrolipoyl]-L-lysyl-[protein] + CoA. It functions in the pathway amino-acid degradation; L-lysine degradation via saccharopine pathway; glutaryl-CoA from L-lysine: step 6/6. In terms of biological role, E2 component of the 2-oxoglutarate dehydrogenase (OGDH) complex which catalyzes the second step in the conversion of 2-oxoglutarate to succinyl-CoA and CO(2). This is Dihydrolipoyllysine-residue succinyltransferase component of 2-oxoglutarate dehydrogenase complex (sucB) from Rickettsia conorii (strain ATCC VR-613 / Malish 7).